The chain runs to 102 residues: Small ribosomal subunit protein bS6 (102 aa).

This sequence belongs to the bacterial ribosomal protein bS6 family.

Its function is as follows. Binds together with bS18 to 16S ribosomal RNA. In Solidesulfovibrio magneticus (strain ATCC 700980 / DSM 13731 / RS-1) (Desulfovibrio magneticus), this protein is Small ribosomal subunit protein bS6.